A 751-amino-acid polypeptide reads, in one-letter code: Protein CLMP1 (751 aa).

A compositionally biased stretch (basic residues) spans 1 to 11 (MGKSGGRKKKS). The tract at residues 1–33 (MGKSGGRKKKSGGSNSNSSQVNSSETSGLSKPS) is disordered. The segment covering 12 to 28 (GGSNSNSSQVNSSETSG) has biased composition (low complexity). TPR repeat units lie at residues 51–84 (AHELKEEGNKKFQARDYVGALEQYENGIKLIPKS), 89–124 (AVFHSNRAACLMQMKPIDYESVISECSMALKSQPGF), and 125–158 (TRALLRRARAFEAVGKFDLAVQDVNVLLGSDPNH). One can recognise a PB1 domain in the interval 290-382 (WRPLKFVYDH…GMLRLHVVDV (93 aa)). The tract at residues 386–443 (QEPMLLEEEEEEVEEKPVIEEVISSPTESLSETEINTEKTDKEVEKEKASSSEDPETK) is disordered. Over residues 390–399 (LLEEEEEEVE) the composition is skewed to acidic residues. The segment covering 409–419 (SSPTESLSETE) has biased composition (polar residues). The span at 421 to 443 (NTEKTDKEVEKEKASSSEDPETK) shows a compositional bias: basic and acidic residues. 3 TPR repeats span residues 434–468 (ASSSEDPETKELEMDDWLFDFAHLFRTHVGIDPDA), 481–514 (SEALEETVTSEKAQPLFDKASAKFQEVAALAFFN), and 536–570 (EVVAAQLQTAYEWVKERYTLAKEKYEQALSIKPDF). Basic and acidic residues predominate over residues 630–648 (EQRMDDLKNPNSNKKEEVS). The interval 630 to 663 (EQRMDDLKNPNSNKKEEVSKRRKKQGGDGNEEVS) is disordered.

As to quaternary structure, interacts with myosin XI-K. In terms of tissue distribution, expressed in roots, stems, leaves, apex, flowers and seeds. Detected throughout the petiole in juvenile and young leaves, but restricted to the petiole midvein in older leaves. Expressed in hydathodes, at the base of the trichome, in the vascular cylinder of primary root and lateral root, in emerging lateral root primordia, in pollen and in developing embryos, but not in mature embryos.

It localises to the cytoplasm. Required for plastid separation and partitioning during cell division. Not involved in plastid constriction or in the organization of cytoplasmic actin cables. Contributes to polar growth of root hairs. The polypeptide is Protein CLMP1 (Arabidopsis thaliana (Mouse-ear cress)).